A 131-amino-acid chain; its full sequence is Profilin-3 (131 aa).

Belongs to the profilin family. In terms of assembly, occurs in many kinds of cells as a complex with monomeric actin in a 1:1 ratio.

The protein resides in the cytoplasm. Its subcellular location is the cytoskeleton. Functionally, binds to actin and affects the structure of the cytoskeleton. At high concentrations, profilin prevents the polymerization of actin, whereas it enhances it at low concentrations. By binding to PIP2, it inhibits the formation of IP3 and DG. This Hevea brasiliensis (Para rubber tree) protein is Profilin-3.